The following is a 115-amino-acid chain: Splicing factor 3B subunit 6-like protein (115 aa).

Positions 9–22 (EVNSILFIKNLSFK) are interaction with pre-mRNA branch site. Positions 12–87 (SILFIKNLSF…RYLVVHYYNP (76 aa)) constitute an RRM domain.

It is found in the nucleus. Functionally, necessary for the splicing of pre-mRNA. This Schizosaccharomyces pombe (strain 972 / ATCC 24843) (Fission yeast) protein is Splicing factor 3B subunit 6-like protein.